The chain runs to 334 residues: Holliday junction branch migration complex subunit RuvB (334 aa).

The segment at Met1–Tyr182 is large ATPase domain (RuvB-L). Residues Leu21, Arg22, Gly63, Lys66, Thr67, Thr68, Glu129–Phe131, Arg172, Tyr182, and Arg219 contribute to the ATP site. Thr67 lines the Mg(2+) pocket. Positions Thr183 to Gln253 are small ATPAse domain (RuvB-S). The segment at Arg256–Asp334 is head domain (RuvB-H). Positions 311 and 316 each coordinate DNA.

The protein belongs to the RuvB family. As to quaternary structure, homohexamer. Forms an RuvA(8)-RuvB(12)-Holliday junction (HJ) complex. HJ DNA is sandwiched between 2 RuvA tetramers; dsDNA enters through RuvA and exits via RuvB. An RuvB hexamer assembles on each DNA strand where it exits the tetramer. Each RuvB hexamer is contacted by two RuvA subunits (via domain III) on 2 adjacent RuvB subunits; this complex drives branch migration. In the full resolvosome a probable DNA-RuvA(4)-RuvB(12)-RuvC(2) complex forms which resolves the HJ. Homohexamer which interacts with RecU.

The protein localises to the cytoplasm. It carries out the reaction ATP + H2O = ADP + phosphate + H(+). The RuvA-RuvB-RuvC complex processes Holliday junction (HJ) DNA during genetic recombination and DNA repair, while the RuvA-RuvB complex plays an important role in the rescue of blocked DNA replication forks via replication fork reversal (RFR). RuvA specifically binds to HJ cruciform DNA, conferring on it an open structure. The RuvB hexamer acts as an ATP-dependent pump, pulling dsDNA into and through the RuvAB complex. RuvB forms 2 homohexamers on either side of HJ DNA bound by 1 or 2 RuvA tetramers; 4 subunits per hexamer contact DNA at a time. Coordinated motions by a converter formed by DNA-disengaged RuvB subunits stimulates ATP hydrolysis and nucleotide exchange. Immobilization of the converter enables RuvB to convert the ATP-contained energy into a lever motion, pulling 2 nucleotides of DNA out of the RuvA tetramer per ATP hydrolyzed, thus driving DNA branch migration. The RuvB motors rotate together with the DNA substrate, which together with the progressing nucleotide cycle form the mechanistic basis for DNA recombination by continuous HJ branch migration. Branch migration allows RuvC to scan DNA until it finds its consensus sequence, where it cleaves and resolves cruciform DNA. This chain is Holliday junction branch migration complex subunit RuvB, found in Bacillus subtilis (strain 168).